The sequence spans 128 residues: Small ribosomal subunit protein uS13 (128 aa).

The disordered stretch occupies residues 85-128 (GSYRGLRHRRSLPVRGQRTHTNARTRKGPRRGTVANKKKATGKT). Basic residues predominate over residues 89 to 128 (GLRHRRSLPVRGQRTHTNARTRKGPRRGTVANKKKATGKT).

The protein belongs to the universal ribosomal protein uS13 family. Part of the 30S ribosomal subunit. Forms a loose heterodimer with protein S19. Forms two bridges to the 50S subunit in the 70S ribosome.

Functionally, located at the top of the head of the 30S subunit, it contacts several helices of the 16S rRNA. In the 70S ribosome it contacts the 23S rRNA (bridge B1a) and protein L5 of the 50S subunit (bridge B1b), connecting the 2 subunits; these bridges are implicated in subunit movement. Contacts the tRNAs in the A and P-sites. This chain is Small ribosomal subunit protein uS13, found in Solibacter usitatus (strain Ellin6076).